A 160-amino-acid polypeptide reads, in one-letter code: D-aminoacyl-tRNA deacylase (160 aa).

The short motif at 137-138 (GP) is the Gly-cisPro motif, important for rejection of L-amino acids element.

Belongs to the DTD family. Homodimer.

It localises to the cytoplasm. The catalysed reaction is glycyl-tRNA(Ala) + H2O = tRNA(Ala) + glycine + H(+). The enzyme catalyses a D-aminoacyl-tRNA + H2O = a tRNA + a D-alpha-amino acid + H(+). An aminoacyl-tRNA editing enzyme that deacylates mischarged D-aminoacyl-tRNAs. Also deacylates mischarged glycyl-tRNA(Ala), protecting cells against glycine mischarging by AlaRS. Acts via tRNA-based rather than protein-based catalysis; rejects L-amino acids rather than detecting D-amino acids in the active site. By recycling D-aminoacyl-tRNA to D-amino acids and free tRNA molecules, this enzyme counteracts the toxicity associated with the formation of D-aminoacyl-tRNA entities in vivo and helps enforce protein L-homochirality. The chain is D-aminoacyl-tRNA deacylase from Chloroflexus aurantiacus (strain ATCC 29364 / DSM 637 / Y-400-fl).